Consider the following 267-residue polypeptide: uncharacterized protein (267 aa).

The segment at 58–90 (RHTDDKQEKNQNEGEDNQKGENKTTDQQDGPKK) is disordered. The next 2 membrane-spanning stretches (helical) occupy residues 101–121 (IYVLAVAGLSFVTSFIMLSQM) and 226–246 (GMTTVKMIQLIIGVVILAWLG).

It is found in the membrane. This is an uncharacterized protein from Caenorhabditis elegans.